We begin with the raw amino-acid sequence, 399 residues long: MPQLSGGGGGGGGDPELCATDEMIPFKDEGDPQKEKIFAEISHPEEEGDLADIKSSLVNESEIIPASNGHEVARQAQTSQEPYHDKAREHPDDGKHPDGGLYNKGPSYSSYSGYIMMPNMNNDPYMSNGSLSPPIPRTSNKVPVVQPSHAVHPLTPLITYSDEHFSPGSHPSHIPSDVNSKQGMSRHPPAPDIPTFYPLSPGGVGQITPPLGWQGQPVYPITGGFRQPYPSSLSVDTSMSRFSHHMIPGPPGPHTTGIPHPAIVTPQVKQEHPHTDSDLMHVKPQHEQRKEQEPKRPHIKKPLNAFMLYMKEMRANVVAECTLKESAAINQILGRRWHALSREEQAKYYELARKERQLHMQLYPGWSARDNYGKKKKRKREKLQESASGTGPRMTAAYI.

Gly residues predominate over residues methionine 1–aspartate 14. The interval methionine 1–glutamate 62 is CTNNB1-binding. The disordered stretch occupies residues methionine 1–lysine 104. Basic and acidic residues-rich tracts occupy residues isoleucine 24–glutamate 45 and proline 82–aspartate 98. A Glycyl lysine isopeptide (Lys-Gly) (interchain with G-Cter in SUMO) cross-link involves residue lysine 27. A Phosphoserine modification is found at serine 132. Threonine 155 is subject to Phosphothreonine; by NLK. Serine 166 bears the Phosphoserine; by NLK mark. Disordered stretches follow at residues serine 166–aspartate 192 and valine 268–histidine 298. Lysine 269 participates in a covalent cross-link: Glycyl lysine isopeptide (Lys-Gly) (interchain with G-Cter in SUMO). The span at lysine 269–arginine 296 shows a compositional bias: basic and acidic residues. The HMG box DNA-binding region spans isoleucine 299–serine 367. The interval arginine 369–isoleucine 399 is disordered.

This sequence belongs to the TCF/LEF family. Binds the armadillo repeat of CTNNB1 and forms a stable complex. Interacts with EP300, TLE1 and PIASG. Binds ALYREF/THOC4, MDFI and MDFIC. Interacts with NLK. Interacts with DAZAP2. Phosphorylated at Thr-155 and/or Ser-166 by NLK. Phosphorylation by NLK at these sites represses LEF1-mediated transcriptional activation of target genes of the canonical Wnt signaling pathway. In terms of tissue distribution, detected in thymus. Not detected in normal colon, but highly expressed in colon cancer biopsies and colon cancer cell lines. Expressed in several pancreatic tumors and weakly expressed in normal pancreatic tissue. Isoforms 1 and 5 are detected in several pancreatic cell lines.

It is found in the nucleus. Transcription factor that binds DNA in a sequence-specific manner. Participates in the Wnt signaling pathway. Activates transcription of target genes in the presence of CTNNB1 and EP300. PIAG antagonizes both Wnt-dependent and Wnt-independent activation by LEF1. TLE1, TLE2, TLE3 and TLE4 repress transactivation mediated by LEF1 and CTNNB1. Regulates T-cell receptor alpha enhancer function. Required for IL17A expressing gamma-delta T-cell maturation and development, via binding to regulator loci of BLK to modulate expression. Acts as a positive regulator of odontoblast differentiation during mesenchymal tooth germ formation, expression is repressed during the bell stage by MSX1-mediated inhibition of CTNNB1 signaling. May play a role in hair cell differentiation and follicle morphogenesis. In terms of biological role, transcriptionally activates MYC and CCND1 expression and enhances proliferation of pancreatic tumor cells. Functionally, lacks the CTNNB1 interaction domain and may therefore be an antagonist for Wnt signaling. Its function is as follows. Transcriptionally activates the fibronectin promoter, binds to and represses transcription from the E-cadherin promoter in a CTNNB1-independent manner, and is involved in reducing cellular aggregation and increasing cell migration of pancreatic cancer cells. This is Lymphoid enhancer-binding factor 1 from Homo sapiens (Human).